The following is a 156-amino-acid chain: Small ribosomal subunit protein uS7 (156 aa).

Belongs to the universal ribosomal protein uS7 family. In terms of assembly, part of the 30S ribosomal subunit. Contacts proteins S9 and S11.

Functionally, one of the primary rRNA binding proteins, it binds directly to 16S rRNA where it nucleates assembly of the head domain of the 30S subunit. Is located at the subunit interface close to the decoding center, probably blocks exit of the E-site tRNA. The polypeptide is Small ribosomal subunit protein uS7 (Mycobacterium avium (strain 104)).